Reading from the N-terminus, the 477-residue chain is MGRTLAEKVWDDHVVRRAEGEPDLLFIDLHLLHEVTSPQAFDGLRQAGRPVRRLDLTIATEDHNTPTLDIDKPIADPVSRAQLETLRKNCAEFGVRLHSLGDVEQGVVHVVGPQLGLTQPGTTVVCGDSHTSTHGAFGALAFGIGTSQVEHVLATQTLPLARPKTMAITVDGELPDGVTAKDLILAIIARIGTGGGQGYILEYRGSAIEKLSMEARMTICNMSIEAGARAGMIAPDETTFAYLKGRAHAPEGEEWDAAVAYWKTLKSDEDAEFDAEVVIAAAALSPFVTWGTNPGQGAPLSASVPDPASYEDASERFAAEKALEYMGLTAGQPLRDIKVDTVFVGSCTNGRIEDLRAAAAIVEGRKVADGVRMLIVPGSARVGLQAVSEGLDVVFKEAGAEWRHAGCSMCLGMNPDQLAPGERSASTSNRNFEGRQGKGGRTHLVSPQVAAATAVLGHLASPADLADENAARTPAGV.

Residues C347, C407, and C410 each coordinate [4Fe-4S] cluster. The disordered stretch occupies residues 418 to 442; it reads LAPGERSASTSNRNFEGRQGKGGRT.

The protein belongs to the aconitase/IPM isomerase family. LeuC type 1 subfamily. In terms of assembly, heterodimer of LeuC and LeuD. [4Fe-4S] cluster is required as a cofactor.

The enzyme catalyses (2R,3S)-3-isopropylmalate = (2S)-2-isopropylmalate. It participates in amino-acid biosynthesis; L-leucine biosynthesis; L-leucine from 3-methyl-2-oxobutanoate: step 2/4. Catalyzes the isomerization between 2-isopropylmalate and 3-isopropylmalate, via the formation of 2-isopropylmaleate. The polypeptide is 3-isopropylmalate dehydratase large subunit (Streptomyces avermitilis (strain ATCC 31267 / DSM 46492 / JCM 5070 / NBRC 14893 / NCIMB 12804 / NRRL 8165 / MA-4680)).